The sequence spans 161 residues: Allophycocyanin subunit alpha-B (161 aa).

Asparagine 71 is modified (N4-methylasparagine). Cysteine 81 provides a ligand contact to (2R,3E)-phycocyanobilin.

The protein belongs to the phycobiliprotein family. As to quaternary structure, heterohexamer of two alpha chains, one alpha-B chain and three beta chains. Post-translationally, contains one covalently linked phycocyanobilin chromophore. The chromophore is added by phycocyanobilin lyase CpcS 1.

The protein resides in the cellular thylakoid membrane. In terms of biological role, light-harvesting photosynthetic bile pigment-protein from the phycobiliprotein complex. Allophycocyanin has a maximum absorption at approximately 654 nanometers. In Nostoc sp. (strain PCC 7120 / SAG 25.82 / UTEX 2576), this protein is Allophycocyanin subunit alpha-B (apcD).